The chain runs to 429 residues: Glutamate-1-semialdehyde 2,1-aminomutase 2 (429 aa).

Position 268 is an N6-(pyridoxal phosphate)lysine (K268).

It belongs to the class-III pyridoxal-phosphate-dependent aminotransferase family. HemL subfamily. In terms of assembly, homodimer. It depends on pyridoxal 5'-phosphate as a cofactor.

It is found in the cytoplasm. The enzyme catalyses (S)-4-amino-5-oxopentanoate = 5-aminolevulinate. It functions in the pathway porphyrin-containing compound metabolism; protoporphyrin-IX biosynthesis; 5-aminolevulinate from L-glutamyl-tRNA(Glu): step 2/2. This is Glutamate-1-semialdehyde 2,1-aminomutase 2 from Bacillus anthracis (strain A0248).